Reading from the N-terminus, the 613-residue chain is MKKAKLIFKDNTPFSLDFDDFYFNSKDGLNESKFVYTHSFEWKNQENFIIAESGFGIGLNFFLTLKRLLETTPSKRPKKLFYISVEAFYIEKEQLREIYQKLEFYEEFKELLEQFLKFYPKAKEGIYRFYFEDCFLDLVFEDIAVLKELDFKADVWYLDGFSPNKNLQMFDENLIFEVARLSKKNTQICTFSSASFLQKNLKKYGFRVEKTKGFRKREMIKAYLENELEFKDKEAYFSRTFSSLKNKKVAIIGAGISSAVLAYELSLRGFEIDVFEKYLELGKGASGNESGILSSLILKPKVNLGEFSELSFIEASRFYRQILDLEFKGVVEFAHNDLMQERFDTQRENVLFKISKNQAFLEEGGVIFPKNLVKNLFEKSKACIYFNHEFQAYKFKNECFTLKFKNDIVKSDYAVLIYAMGADTKDFVFYDEMKLSKVRGQVTHLKPFLDTPFPLSSKAYICPVKDDLQVIGASYDRLNASLESKEEDDKQNIENIAEFIDKNTKLEIIGSKVGFRSYSSDRFMIVGNAYDEVFYKEEYKALLWTKNKEQKPAKMSCNLYFNFAHGSRGFSTSVLAARYLCALINNEPLCLEKKYIHAIHPARFLIRKLKKGL.

Residues 1–225 (MKKAKLIFKD…KREMIKAYLE (225 aa)) form a tRNA (mnm(5)s(2)U34)-methyltransferase region. Residues 252-613 (IGAGISSAVL…FLIRKLKKGL (362 aa)) are FAD-dependent cmnm(5)s(2)U34 oxidoreductase.

In the N-terminal section; belongs to the methyltransferase superfamily. tRNA (mnm(5)s(2)U34)-methyltransferase family. The protein in the C-terminal section; belongs to the DAO family. Requires FAD as cofactor.

It is found in the cytoplasm. The enzyme catalyses 5-aminomethyl-2-thiouridine(34) in tRNA + S-adenosyl-L-methionine = 5-methylaminomethyl-2-thiouridine(34) in tRNA + S-adenosyl-L-homocysteine + H(+). Its function is as follows. Catalyzes the last two steps in the biosynthesis of 5-methylaminomethyl-2-thiouridine (mnm(5)s(2)U) at the wobble position (U34) in tRNA. Catalyzes the FAD-dependent demodification of cmnm(5)s(2)U34 to nm(5)s(2)U34, followed by the transfer of a methyl group from S-adenosyl-L-methionine to nm(5)s(2)U34, to form mnm(5)s(2)U34. This chain is tRNA 5-methylaminomethyl-2-thiouridine biosynthesis bifunctional protein MnmC, found in Campylobacter jejuni (strain RM1221).